A 488-amino-acid polypeptide reads, in one-letter code: Proline--tRNA ligase (488 aa).

The protein belongs to the class-II aminoacyl-tRNA synthetase family. ProS type 3 subfamily. In terms of assembly, homodimer.

Its subcellular location is the cytoplasm. The catalysed reaction is tRNA(Pro) + L-proline + ATP = L-prolyl-tRNA(Pro) + AMP + diphosphate. In terms of biological role, catalyzes the attachment of proline to tRNA(Pro) in a two-step reaction: proline is first activated by ATP to form Pro-AMP and then transferred to the acceptor end of tRNA(Pro). This chain is Proline--tRNA ligase, found in Borreliella burgdorferi (strain ZS7) (Borrelia burgdorferi).